Reading from the N-terminus, the 536-residue chain is Glucan 1,6-alpha-glucosidase (536 aa).

Asp194 serves as the catalytic Nucleophile. Glu236 serves as the catalytic Proton donor.

This sequence belongs to the glycosyl hydrolase 13 family.

It is found in the cytoplasm. It carries out the reaction Hydrolysis of (1-&gt;6)-alpha-D-glucosidic linkages in (1-&gt;6)-alpha-D-glucans and derived oligosaccharides.. Its function is as follows. The physiological substrates may be short isomaltosaccharides. The chain is Glucan 1,6-alpha-glucosidase (dexB) from Streptococcus mutans serotype c (strain ATCC 700610 / UA159).